The sequence spans 389 residues: Packaging protein 3 (389 aa).

Residues 1–131 (MHPVLRQMKP…VKAEVNFQTT (131 aa)) are interaction with packaging protein 1. A disordered region spans residues 350 to 389 (EKENPDGSVSFQQHERGTQSHENGGHAEPAYSRRQLGRFY). Over residues 362 to 374 (QHERGTQSHENGG) the composition is skewed to basic and acidic residues.

Belongs to the adenoviridae packaging protein 3 family. As to quaternary structure, part of the genome packaging complex composed of packaging proteins 1, 2 and 3; this complex specifically binds to the packaging sequence on the left end of viral genomic DNA and performs packaging of the viral genome. Interacts with hexon-linking protein IIIa; this interaction is required to promote correct genome packaging. In terms of processing, cleaved at different sites by the viral protease during virion maturation.

Its subcellular location is the host nucleus. Its function is as follows. Involved in viral genome packaging through its interaction with packaging proteins 1 and 2. After proteolytic cleavage by adenovirus protease, L1 52/55k protein is removed from the capsid during viral maturation. This Canine adenovirus serotype 1 (strain CLL) (CAdV-1) protein is Packaging protein 3.